Consider the following 201-residue polypeptide: Two-component response regulator ORR10 (201 aa).

In terms of domain architecture, Response regulatory spans 10-142; it reads HVLAVDDSLP…DMSKLKPHIL (133 aa). Asp-75 bears the 4-aspartylphosphate mark. The disordered stretch occupies residues 149–201; it reads HYQQEQHLQSNSESNNSSNPTSENSSSSTSTNSHKRKAVDEEILPHTIRPRHS. Low complexity predominate over residues 158–180; sequence SNSESNNSSNPTSENSSSSTSTN.

Belongs to the ARR family. Type-A subfamily. Post-translationally, two-component system major event consists of a His-to-Asp phosphorelay between a sensor histidine kinase (HK) and a response regulator (RR). In plants, the His-to-Asp phosphorelay involves an additional intermediate named Histidine-containing phosphotransfer protein (HPt). This multistep phosphorelay consists of a His-Asp-His-Asp sequential transfer of a phosphate group between first a His and an Asp of the HK protein, followed by the transfer to a conserved His of the HPt protein and finally the transfer to an Asp in the receiver domain of the RR protein. Expressed in mature leaves, and at low levels in roots, shoots and flowers.

Its function is as follows. Functions as a response regulator involved in His-to-Asp phosphorelay signal transduction system. Phosphorylation of the Asp residue in the receiver domain activates the ability of the protein to promote the transcription of target genes. Type-A response regulators seem to act as negative regulators of the cytokinin signaling. This is Two-component response regulator ORR10 from Oryza sativa subsp. indica (Rice).